The primary structure comprises 255 residues: MLMVISPAKSLDFTAPQTVLPLTTPELKAQIAELSKVTRKLTAADLKRLMHISDALATLNRERFQAFDPEVEEGLQAVIAFNGDVYAGLNARELDRPALEWAQDHLRILSGLYGVLRPFDALQPYRLEMGTRLKTKKGANLYDFWGETISRTLNQAAEGHADPTLVNLASQEYFGAVDAKALKLPVVTCHFKEEKGGELRVLGFFAKKARGRMARYIIDNRIDQAEALKGFDLDGYRFQPGLSTSADWVFARPQP.

Belongs to the UPF0246 family.

This Caulobacter vibrioides (strain ATCC 19089 / CIP 103742 / CB 15) (Caulobacter crescentus) protein is UPF0246 protein CC_3385.